Reading from the N-terminus, the 1046-residue chain is Translation initiation factor IF-2 (1046 aa).

The tract at residues 49–448 (EAFPAEGSAP…MGAMVPRGNG (400 aa)) is disordered. The segment covering 52–71 (PAEGSAPSSRPGGRPGNGAR) has biased composition (low complexity). The span at 94–111 (RPGPGGRPVPGRPGPAPL) shows a compositional bias: pro residues. Composition is skewed to low complexity over residues 112-139 (PGAS…SQPV) and 147-159 (PRPA…AAAP). The span at 160–176 (APAPSAPAPAPSAPAPA) shows a compositional bias: pro residues. Low complexity predominate over residues 177-187 (PITSAPTAATP). Over residues 188–206 (PAAPQRPTPGGPRPGPAAP) the composition is skewed to pro residues. The segment covering 210–222 (RTGGPGGPGGPGG) has biased composition (gly residues). The segment covering 223–235 (GPRPGPRPGPRPA) has biased composition (pro residues). Residues 244–253 (SPAAGPRAAS) are compositionally biased toward low complexity. Pro residues-rich tracts occupy residues 260 to 281 (SAPP…PRPG) and 304 to 314 (RPTPGQMPPRP). Low complexity predominate over residues 320–333 (PRPNSNMFQPRPAG). The span at 334–414 (GAPGRPGGGG…AGAFGPGGRG (81 aa)) shows a compositional bias: gly residues. Residues 415–426 (RPGRQRKSKRAK) are compositionally biased toward basic residues. Positions 539-711 (ARPPVVTVMG…VILTADASLD (173 aa)) constitute a tr-type G domain. A G1 region spans residues 548–555 (GHVDHGKT). 548-555 (GHVDHGKT) provides a ligand contact to GTP. Residues 573-577 (GITQH) are G2. The tract at residues 598–601 (DTPG) is G3. Residues 598 to 602 (DTPGH) and 652 to 655 (NKVD) contribute to the GTP site. The G4 stretch occupies residues 652-655 (NKVD). Residues 688–690 (SAR) form a G5 region.

Belongs to the TRAFAC class translation factor GTPase superfamily. Classic translation factor GTPase family. IF-2 subfamily.

It is found in the cytoplasm. In terms of biological role, one of the essential components for the initiation of protein synthesis. Protects formylmethionyl-tRNA from spontaneous hydrolysis and promotes its binding to the 30S ribosomal subunits. Also involved in the hydrolysis of GTP during the formation of the 70S ribosomal complex. In Parafrankia sp. (strain EAN1pec), this protein is Translation initiation factor IF-2.